A 516-amino-acid chain; its full sequence is Glucose-1-phosphate adenylyltransferase large subunit 1, chloroplastic/amyloplastic (516 aa).

Residues 1–45 (MQFALALDTNSGPHQIRSCEGDGIDRLEKLSIGGRKQEKALRNRC) constitute a chloroplast transit peptide.

The protein belongs to the bacterial/plant glucose-1-phosphate adenylyltransferase family. As to quaternary structure, heterotetramer. Endosperm.

The protein resides in the plastid. It is found in the chloroplast. The protein localises to the amyloplast. It carries out the reaction alpha-D-glucose 1-phosphate + ATP + H(+) = ADP-alpha-D-glucose + diphosphate. The protein operates within glycan biosynthesis; starch biosynthesis. With respect to regulation, activated by 3'phosphoglycerate, inhibited by orthophosphate. Allosteric regulation. Its function is as follows. This protein plays a role in synthesis of starch. It catalyzes the synthesis of the activated glycosyl donor, ADP-glucose from Glc-1-P and ATP. This is Glucose-1-phosphate adenylyltransferase large subunit 1, chloroplastic/amyloplastic (SH2) from Zea mays (Maize).